The following is a 165-amino-acid chain: Phosphopantetheine adenylyltransferase (165 aa).

Thr9 is a substrate binding site. ATP-binding positions include Thr9–Phe10 and His17. Substrate is bound by residues Lys41, Leu73, and Arg87. Residues Gly88–Arg90, Glu98, and Leu123–Arg129 contribute to the ATP site.

This sequence belongs to the bacterial CoaD family. Homohexamer. Mg(2+) is required as a cofactor.

It is found in the cytoplasm. It catalyses the reaction (R)-4'-phosphopantetheine + ATP + H(+) = 3'-dephospho-CoA + diphosphate. Its pathway is cofactor biosynthesis; coenzyme A biosynthesis; CoA from (R)-pantothenate: step 4/5. Functionally, reversibly transfers an adenylyl group from ATP to 4'-phosphopantetheine, yielding dephospho-CoA (dPCoA) and pyrophosphate. This is Phosphopantetheine adenylyltransferase from Rhizorhabdus wittichii (strain DSM 6014 / CCUG 31198 / JCM 15750 / NBRC 105917 / EY 4224 / RW1) (Sphingomonas wittichii).